The primary structure comprises 251 residues: Hydroxyacylglutathione hydrolase (251 aa).

H53, H55, D57, H58, H110, D127, and H165 together coordinate Zn(2+).

The protein belongs to the metallo-beta-lactamase superfamily. Glyoxalase II family. Monomer. Requires Zn(2+) as cofactor.

The enzyme catalyses an S-(2-hydroxyacyl)glutathione + H2O = a 2-hydroxy carboxylate + glutathione + H(+). It participates in secondary metabolite metabolism; methylglyoxal degradation; (R)-lactate from methylglyoxal: step 2/2. Its function is as follows. Thiolesterase that catalyzes the hydrolysis of S-D-lactoyl-glutathione to form glutathione and D-lactic acid. In Erwinia tasmaniensis (strain DSM 17950 / CFBP 7177 / CIP 109463 / NCPPB 4357 / Et1/99), this protein is Hydroxyacylglutathione hydrolase.